We begin with the raw amino-acid sequence, 181 residues long: CDP-diacylglycerol--glycerol-3-phosphate 3-phosphatidyltransferase (181 aa).

4 helical membrane-spanning segments follow: residues 8 to 28, 35 to 55, 64 to 84, and 148 to 168; these read PNYL…AFYI, KLGA…GYIA, FGKM…IIML, and IIYL…LTII.

Belongs to the CDP-alcohol phosphatidyltransferase class-I family.

The protein localises to the cell membrane. It carries out the reaction a CDP-1,2-diacyl-sn-glycerol + sn-glycerol 3-phosphate = a 1,2-diacyl-sn-glycero-3-phospho-(1'-sn-glycero-3'-phosphate) + CMP + H(+). It functions in the pathway phospholipid metabolism; phosphatidylglycerol biosynthesis; phosphatidylglycerol from CDP-diacylglycerol: step 1/2. Functionally, this protein catalyzes the committed step to the synthesis of the acidic phospholipids. The protein is CDP-diacylglycerol--glycerol-3-phosphate 3-phosphatidyltransferase (pgsA) of Rickettsia felis (strain ATCC VR-1525 / URRWXCal2) (Rickettsia azadi).